Reading from the N-terminus, the 82-residue chain is Delta-actitoxin-Aeq2b 3 (82 aa).

The first 19 residues, 1-19, serve as a signal peptide directing secretion; it reads MNRLMILVFAAVILALASA. Positions 20–26 are excised as a propeptide; sequence DEDVDIT. 3 disulfide bridges follow: cysteine 32–cysteine 79, cysteine 34–cysteine 69, and cysteine 62–cysteine 80.

The protein belongs to the sea anemone sodium channel inhibitory toxin family. Type I subfamily.

It localises to the secreted. It is found in the nematocyst. Binds specifically to voltage-gated sodium channels (Nav), thereby delaying their inactivation during signal transduction. Causes death to crabs. This Actinia equina (Beadlet anemone) protein is Delta-actitoxin-Aeq2b 3.